We begin with the raw amino-acid sequence, 222 residues long: Imidazoleglycerol-phosphate dehydratase (222 aa).

This sequence belongs to the imidazoleglycerol-phosphate dehydratase family.

The enzyme catalyses D-erythro-1-(imidazol-4-yl)glycerol 3-phosphate = 3-(imidazol-4-yl)-2-oxopropyl phosphate + H2O. Its pathway is amino-acid biosynthesis; L-histidine biosynthesis; L-histidine from 5-phospho-alpha-D-ribose 1-diphosphate: step 6/9. This Scheffersomyces stipitis (strain ATCC 58785 / CBS 6054 / NBRC 10063 / NRRL Y-11545) (Yeast) protein is Imidazoleglycerol-phosphate dehydratase (HIS3).